The primary structure comprises 397 residues: Cathepsin E (397 aa).

The signal sequence occupies residues 1 to 20 (MKPLLVLLLLLLLDLAQAQG). Residues 21-59 (ALHRVPLRRHQSLRKKLRAQGQLSEFWRSHNLDMTRLSE) constitute a propeptide, activation peptide. The Peptidase A1 domain occupies 79 to 393 (YFGTISIGTP…DRGNNQVGLA (315 aa)). A glycan (N-linked (GlcNAc...) asparagine) is linked at Asn91. Residue Asp97 is part of the active site. Intrachain disulfides connect Cys110–Cys115 and Cys273–Cys277. Asp282 is a catalytic residue. Asn323 is a glycosylation site (N-linked (GlcNAc...) asparagine).

This sequence belongs to the peptidase A1 family. Homodimer; disulfide-linked. Post-translationally, glycosylated. The nature of the carbohydrate chain varies between cell types. In fibroblasts, the proenzyme contains a high mannose-type oligosaccharide, while the mature enzyme contains a complex-type oligosaccharide. Expressed abundantly in the stomach, club cells and alveolar macrophages of the lung, brain microglia, spleen and activated B-lymphocytes. Not expressed in resting B-lymphocytes.

Its subcellular location is the endosome. The catalysed reaction is Similar to cathepsin D, but slightly broader specificity.. In terms of biological role, may have a role in immune function. Probably involved in the processing of antigenic peptides during MHC class II-mediated antigen presentation. May play a role in activation-induced lymphocyte depletion in the thymus, and in neuronal degeneration and glial cell activation in the brain. The sequence is that of Cathepsin E (Ctse) from Mus musculus (Mouse).